The following is a 154-amino-acid chain: Myoglobin (154 aa).

The Globin domain maps to 2-148 (GLSDGEWQLV…FRHDMAAKYK (147 aa)). Ser4 carries the post-translational modification Phosphoserine. Residue His65 participates in nitrite binding. Residue His65 participates in O2 binding. Residue Thr68 is modified to Phosphothreonine. His94 contacts heme b.

The protein belongs to the globin family. As to quaternary structure, monomeric.

It is found in the cytoplasm. Its subcellular location is the sarcoplasm. The enzyme catalyses Fe(III)-heme b-[protein] + nitric oxide + H2O = Fe(II)-heme b-[protein] + nitrite + 2 H(+). It carries out the reaction H2O2 + AH2 = A + 2 H2O. Monomeric heme protein which primary function is to store oxygen and facilitate its diffusion within muscle tissues. Reversibly binds oxygen through a pentacoordinated heme iron and enables its timely and efficient release as needed during periods of heightened demand. Depending on the oxidative conditions of tissues and cells, and in addition to its ability to bind oxygen, it also has a nitrite reductase activity whereby it regulates the production of bioactive nitric oxide. Under stress conditions, like hypoxia and anoxia, it also protects cells against reactive oxygen species thanks to its pseudoperoxidase activity. This is Myoglobin (MB) from Osphranter rufus (Red kangaroo).